The sequence spans 591 residues: V-type ATP synthase alpha chain (591 aa).

Glycine 233–threonine 240 provides a ligand contact to ATP.

It belongs to the ATPase alpha/beta chains family.

It catalyses the reaction ATP + H2O + 4 H(+)(in) = ADP + phosphate + 5 H(+)(out). Its function is as follows. Produces ATP from ADP in the presence of a proton gradient across the membrane. The V-type alpha chain is a catalytic subunit. The polypeptide is V-type ATP synthase alpha chain (Streptococcus pyogenes serotype M18 (strain MGAS8232)).